Here is a 129-residue protein sequence, read N- to C-terminus: Lysozyme C (129 aa).

Positions 1–129 constitute a C-type lysozyme domain; sequence KIYKRCELAA…VSTWIKDCKL (129 aa). Cystine bridges form between Cys6–Cys127, Cys30–Cys115, Cys64–Cys80, and Cys76–Cys94. Catalysis depends on residues Glu35 and Asp52.

The protein belongs to the glycosyl hydrolase 22 family. In terms of assembly, monomer.

The protein localises to the secreted. The catalysed reaction is Hydrolysis of (1-&gt;4)-beta-linkages between N-acetylmuramic acid and N-acetyl-D-glucosamine residues in a peptidoglycan and between N-acetyl-D-glucosamine residues in chitodextrins.. Lysozymes have primarily a bacteriolytic function; those in tissues and body fluids are associated with the monocyte-macrophage system and enhance the activity of immunoagents. In Ortalis vetula (Plain chachalaca), this protein is Lysozyme C (LYZ).